Here is a 349-residue protein sequence, read N- to C-terminus: MIVLFVDFDYFFAQVEEILNPSLKGKPVVVCVYSGRTKDSGAVATSNYEARKLGIKAGMPIIKAKEIGKDAVFLPMRKEVYQQVSRRVMNIISGYGDKLEIASIDEAYLDITRRVKDFDEAKELARKLKAEVLEKERLRVTVGIGPNKVVAKIIADMNKPDGLGIIYPEEVKDFLYNLDISKVPGVGKITEEILRKVGINRLGDVINKSGELVNLVGKSKANYLLSLANNTYHDPVESREITHRGRYVTLPENTRDLNRILPSLKRSIEEAYSKVDGIPMEIYVVAIMEDLDIVSKGKSFKFGVSQDRALSVAQELLNKILESDKRKLRRVGVRLGKITKSSTLEDFLH.

The UmuC domain maps to 3–187 (VLFVDFDYFF…LDISKVPGVG (185 aa)). Positions 7 and 105 each coordinate Mg(2+). E106 is an active-site residue.

Belongs to the DNA polymerase type-Y family. In terms of assembly, monomer. Requires Mg(2+) as cofactor.

It localises to the cytoplasm. It carries out the reaction DNA(n) + a 2'-deoxyribonucleoside 5'-triphosphate = DNA(n+1) + diphosphate. Poorly processive, error-prone DNA polymerase involved in untargeted mutagenesis. Copies undamaged DNA at stalled replication forks, which arise in vivo from mismatched or misaligned primer ends. These misaligned primers can be extended by PolIV. Exhibits no 3'-5' exonuclease (proofreading) activity. May be involved in translesional synthesis. The sequence is that of DNA polymerase IV from Metallosphaera sedula (strain ATCC 51363 / DSM 5348 / JCM 9185 / NBRC 15509 / TH2).